The following is a 296-amino-acid chain: NADH-cytochrome b5 reductase 2 (296 aa).

A helical transmembrane segment spans residues 12–29; sequence LPIALGVGAASIATAIIL. An FAD-binding FR-type domain is found at 47–151; sequence NEWIDLPIIK…KGPITKWEWK (105 aa). Position 154-189 (154-189) interacts with FAD; sequence SYDSITLLGAGTGINPLYQLVHHIAENPEDNTKIHL.

The protein belongs to the flavoprotein pyridine nucleotide cytochrome reductase family. It depends on FAD as a cofactor.

The protein localises to the mitochondrion outer membrane. The enzyme catalyses 2 Fe(III)-[cytochrome b5] + NADH = 2 Fe(II)-[cytochrome b5] + NAD(+) + H(+). Functionally, may mediate the reduction of outer membrane cytochrome b5. The chain is NADH-cytochrome b5 reductase 2 (MCR1) from Kluyveromyces lactis (strain ATCC 8585 / CBS 2359 / DSM 70799 / NBRC 1267 / NRRL Y-1140 / WM37) (Yeast).